A 219-amino-acid polypeptide reads, in one-letter code: MGRRPARCYRYCKNKPYPKSRFCRGVPDPKIRIFDLGKKRANVDDFPLCVHLVSDEYEQLSSEALEAGRICCNKYLVKNCGKDQFHIRMRLHPFHVIRINKMLSCAGADRLQTGMRGAFGKPQGTVARVRIGQPIMSVRSSDRWKAQVIEALRRAKFKFPGRQKIYVSKKWGFTKYERDEFEKLREEGRLANDGCIVQYRPEHGPLDAWRKVQAEILNV.

Belongs to the universal ribosomal protein uL16 family. In terms of assembly, component of the large ribosomal subunit. Mature ribosomes consist of a small (40S) and a large (60S) subunit. The 40S subunit contains about 33 different proteins and 1 molecule of RNA (18S). The 60S subunit contains about 49 different proteins and 3 molecules of RNA (28S, 5.8S and 5S).

This is Large ribosomal subunit protein uL16 (RpL10) from Bombyx mandarina (Wild silk moth).